The chain runs to 166 residues: Fer3-like protein (166 aa).

The segment at 57–88 (FEEGDPEEEECEVDQGDGEEEEEEERGRGVSL) is disordered. A compositionally biased stretch (acidic residues) spans 60–80 (GDPEEEECEVDQGDGEEEEEE). The bHLH domain occupies 101–153 (AQRQAANIRERKRMFNLNEAFDQLRRKVPTFAYEKRLSRIETLRLAIVYISFM).

As to quaternary structure, heterodimer with TCF3/E12. Interacts with the bHLH domain of TCF3/E12.

It localises to the nucleus. Transcription factor that binds to the E-box and functions as inhibitor of transcription. DNA binding requires dimerization with an E protein. Inhibits transcription activation by ASCL1/MASH1 by sequestering E proteins. This is Fer3-like protein (FERD3L) from Homo sapiens (Human).